The sequence spans 681 residues: Methionine--tRNA ligase (681 aa).

The short motif at 18 to 28 (PYANGSIHLGH) is the 'HIGH' region element. The Zn(2+) site is built by Cys-149, Cys-152, Cys-162, and Cys-165. A 'KMSKS' region motif is present at residues 334–338 (KMSKS). Residue Lys-337 participates in ATP binding. The region spanning 580 to 681 (DFAKLDLRIV…NGAEPGQRVS (102 aa)) is the tRNA-binding domain.

It belongs to the class-I aminoacyl-tRNA synthetase family. MetG type 1 subfamily. In terms of assembly, homodimer. Zn(2+) serves as cofactor.

Its subcellular location is the cytoplasm. The enzyme catalyses tRNA(Met) + L-methionine + ATP = L-methionyl-tRNA(Met) + AMP + diphosphate. In terms of biological role, is required not only for elongation of protein synthesis but also for the initiation of all mRNA translation through initiator tRNA(fMet) aminoacylation. The protein is Methionine--tRNA ligase of Chromohalobacter salexigens (strain ATCC BAA-138 / DSM 3043 / CIP 106854 / NCIMB 13768 / 1H11).